The sequence spans 879 residues: Prostaglandin F2 receptor negative regulator (879 aa).

The N-terminal stretch at methionine 1 to glycine 21 is a signal peptide. 2 Ig-like C2-type domains span residues arginine 22–glutamine 137 and proline 149–glutamine 263. Residues arginine 22–proline 832 are Extracellular-facing. 2 disulfides stabilise this stretch: cysteine 43/cysteine 119 and cysteine 169/cysteine 247. Residue asparagine 44 is glycosylated (N-linked (GlcNAc...) asparagine). Residues arginine 89 to aspartate 91 carry the Cell attachment site motif. Threonine 271 is modified (phosphothreonine). Ig-like C2-type domains are found at residues proline 276–valine 389, proline 406–serine 536, alanine 544–proline 662, and proline 688–histidine 813. Cysteine 299 and cysteine 373 are joined by a disulfide. 3 N-linked (GlcNAc...) asparagine glycosylation sites follow: asparagine 300, asparagine 383, and asparagine 413. Positions proline 424–leucine 427 match the Endoplasmic reticulum retention signal motif. An intrachain disulfide couples cysteine 429 to cysteine 515. Asparagine 525, asparagine 600, asparagine 618, and asparagine 691 each carry an N-linked (GlcNAc...) asparagine glycan. Cysteine 571 and cysteine 655 are oxidised to a cystine. Positions arginine 703 to aspartate 705 match the Cell attachment site motif. Cysteine 711 and cysteine 793 form a disulfide bridge. Residues leucine 833 to cysteine 853 traverse the membrane as a helical segment. Over serine 854–aspartate 879 the chain is Cytoplasmic.

In terms of assembly, interacts with CD9 and CD81. Part of a complex composed of CD9, CD81 and IGSF8. Also seems to interact with CD63, CD82 and CD151. Expressed in myoblasts (at protein level).

It localises to the endoplasmic reticulum membrane. The protein resides in the golgi apparatus. The protein localises to the trans-Golgi network membrane. Inhibits the binding of prostaglandin F2-alpha (PGF2-alpha) to its specific FP receptor, by decreasing the receptor number rather than the affinity constant. Functional coupling with the prostaglandin F2-alpha receptor seems to occur. In myoblasts, associates with tetraspanins CD9 and CD81 to prevent myotube fusion during muscle regeneration. The protein is Prostaglandin F2 receptor negative regulator (Ptgfrn) of Mus musculus (Mouse).